Here is a 71-residue protein sequence, read N- to C-terminus: Putative membrane protein insertion efficiency factor (71 aa).

Belongs to the UPF0161 family.

It localises to the cell membrane. In terms of biological role, could be involved in insertion of integral membrane proteins into the membrane. The protein is Putative membrane protein insertion efficiency factor of Ruminiclostridium cellulolyticum (strain ATCC 35319 / DSM 5812 / JCM 6584 / H10) (Clostridium cellulolyticum).